The primary structure comprises 444 residues: Xaa-Pro dipeptidase (444 aa).

The Mn(2+) site is built by aspartate 247, aspartate 258, histidine 340, glutamate 385, and glutamate 424.

It belongs to the peptidase M24B family. Bacterial-type prolidase subfamily. Mn(2+) is required as a cofactor.

The enzyme catalyses Xaa-L-Pro dipeptide + H2O = an L-alpha-amino acid + L-proline. Splits dipeptides with a prolyl residue in the C-terminal position. The chain is Xaa-Pro dipeptidase from Photorhabdus laumondii subsp. laumondii (strain DSM 15139 / CIP 105565 / TT01) (Photorhabdus luminescens subsp. laumondii).